The chain runs to 406 residues: Enoyl-[acyl-carrier-protein] reductase [NADH] (406 aa).

Residues 48–53, 74–75, 111–112, and 140–141 each bind NAD(+); these read GASTGF, FE, DA, and IA. Tyr-226 is a substrate binding site. Tyr-236 acts as the Proton donor in catalysis. NAD(+) contacts are provided by residues Lys-245 and 275–277; that span reads LVT.

The protein belongs to the TER reductase family. In terms of assembly, monomer.

It carries out the reaction a 2,3-saturated acyl-[ACP] + NAD(+) = a (2E)-enoyl-[ACP] + NADH + H(+). It participates in lipid metabolism; fatty acid biosynthesis. Functionally, involved in the final reduction of the elongation cycle of fatty acid synthesis (FAS II). Catalyzes the reduction of a carbon-carbon double bond in an enoyl moiety that is covalently linked to an acyl carrier protein (ACP). The sequence is that of Enoyl-[acyl-carrier-protein] reductase [NADH] from Coxiella burnetii (strain CbuK_Q154) (Coxiella burnetii (strain Q154)).